The following is a 560-amino-acid chain: Formate--tetrahydrofolate ligase (560 aa).

Residue 69-76 (TPAGEGKS) participates in ATP binding.

This sequence belongs to the formate--tetrahydrofolate ligase family.

The enzyme catalyses (6S)-5,6,7,8-tetrahydrofolate + formate + ATP = (6R)-10-formyltetrahydrofolate + ADP + phosphate. Its pathway is one-carbon metabolism; tetrahydrofolate interconversion. The chain is Formate--tetrahydrofolate ligase from Listeria monocytogenes serovar 1/2a (strain ATCC BAA-679 / EGD-e).